Consider the following 181-residue polypeptide: Shikimate kinase 2 (181 aa).

12–17 is an ATP binding site; the sequence is GCGKTT. Positions 16 and 32 each coordinate Mg(2+). Aspartate 34, arginine 58, and glycine 79 together coordinate substrate. The segment at 112–126 is LID domain; sequence EAEPEADLRPTLTGK. Arginine 120 is a binding site for ATP. Arginine 139 is a binding site for substrate.

Belongs to the shikimate kinase family. AroL subfamily. Monomer. The cofactor is Mg(2+).

Its subcellular location is the cytoplasm. It carries out the reaction shikimate + ATP = 3-phosphoshikimate + ADP + H(+). The protein operates within metabolic intermediate biosynthesis; chorismate biosynthesis; chorismate from D-erythrose 4-phosphate and phosphoenolpyruvate: step 5/7. Catalyzes the specific phosphorylation of the 3-hydroxyl group of shikimic acid using ATP as a cosubstrate. The protein is Shikimate kinase 2 of Salmonella heidelberg (strain SL476).